The sequence spans 135 residues: Small ribosomal subunit protein uS12 (135 aa).

A 3-methylthioaspartic acid modification is found at Asp89. Residues 103-135 (DTAGVKNRMQSRSKYGTKRPKPGQAAAPAGKKR) form a disordered region. Residues 111–123 (MQSRSKYGTKRPK) show a composition bias toward basic residues. Residues 124 to 135 (PGQAAAPAGKKR) show a composition bias toward low complexity.

This sequence belongs to the universal ribosomal protein uS12 family. As to quaternary structure, part of the 30S ribosomal subunit. Contacts proteins S8 and S17. May interact with IF1 in the 30S initiation complex.

Functionally, with S4 and S5 plays an important role in translational accuracy. Its function is as follows. Interacts with and stabilizes bases of the 16S rRNA that are involved in tRNA selection in the A site and with the mRNA backbone. Located at the interface of the 30S and 50S subunits, it traverses the body of the 30S subunit contacting proteins on the other side and probably holding the rRNA structure together. The combined cluster of proteins S8, S12 and S17 appears to hold together the shoulder and platform of the 30S subunit. This chain is Small ribosomal subunit protein uS12, found in Gloeobacter violaceus (strain ATCC 29082 / PCC 7421).